Reading from the N-terminus, the 206-residue chain is Putative type I restriction enzyme MpnIIP endonuclease subunit C-terminal part (206 aa).

Functionally, the C-terminal section of a putative type I restriction enzyme that if reconstituted might recognize 5'-GAN(7)TAY-3' and cleave a random distance away. Subunit R is required for both nuclease and ATPase activities, but not for modification. This Mycoplasma pneumoniae (strain ATCC 29342 / M129 / Subtype 1) (Mycoplasmoides pneumoniae) protein is Putative type I restriction enzyme MpnIIP endonuclease subunit C-terminal part.